The sequence spans 450 residues: MTDRRPTIMDKAKKQWEVMALNSLLILFTNFAIFLSMPPQTEIFEDIICSKMHSESALHPQGEDDGCRGALVQSELARINGWKTTFEALPRMLLSEAWTRVVCIYSDVLPLSLVWLSGLLRSVGGGEPVIDSIMCVMVMDVFEESDRAVALLRLHSVFIVAKIFAAPASAALVALTSAWTPFLISLAMLFVAQALSFLLPETLGYVEQKEPDDSRAHKMAGKKGNLNQRFALAARLIVQNRNMAPIIIVNLVASITKSSNHFLLQYSSTKYEWSYSQSNLVLVIREASSLLTYLVLMPAASKAIRRVSSKSVTAQDKRLCQGSGLLNVFGFFSIALAGTPVVYVLALAFLSLGSGFDTAMSGFATSLVQPDQIASLHSTAATAKSLGGLVAGPLFARLMQVGFELGSGWLGIPYIAAGLFFITVLVAVCSIRIQSRSLDEDGQPLLQTDV.

8 helical membrane passes run 18 to 38 (VMAL…LSMP), 100 to 120 (RVVC…SGLL), 148 to 168 (AVAL…AAPA), 171 to 191 (ALVA…MLFV), 244 to 264 (APII…HFLL), 280 to 300 (LVLV…MPAA), 329 to 349 (FGFF…ALAF), and 408 to 428 (GWLG…LVAV).

The protein belongs to the major facilitator superfamily.

The protein localises to the membrane. Its pathway is secondary metabolite biosynthesis. Functionally, MFS-type transporter; part of the cluster that mediates the biosynthesis of a highly modified cyclo-arginine-tryptophan dipeptide (cRW). The sequence is that of MFS-type transporter avaK from Aspergillus versicolor.